Here is a 100-residue protein sequence, read N- to C-terminus: MLENSLILGAYLFCLGIYGLTTSRNMIRALMCLELMLNGVNINLVAFSSFLDPDKIRGQVFAIFIIAIAAAEAAIGLAIILNIFRNRNSIRIDQFNLLKW.

Helical transmembrane passes span 1–21 (MLENSLILGAYLFCLGIYGLT), 30–50 (LMCLELMLNGVNINLVAFSSF), and 60–80 (VFAIFIIAIAAAEAAIGLAII).

Belongs to the complex I subunit 4L family. As to quaternary structure, NDH is composed of at least 16 different subunits, 5 of which are encoded in the nucleus.

The protein localises to the plastid. It localises to the chloroplast thylakoid membrane. It carries out the reaction a plastoquinone + NADH + (n+1) H(+)(in) = a plastoquinol + NAD(+) + n H(+)(out). The catalysed reaction is a plastoquinone + NADPH + (n+1) H(+)(in) = a plastoquinol + NADP(+) + n H(+)(out). Its function is as follows. NDH shuttles electrons from NAD(P)H:plastoquinone, via FMN and iron-sulfur (Fe-S) centers, to quinones in the photosynthetic chain and possibly in a chloroplast respiratory chain. The immediate electron acceptor for the enzyme in this species is believed to be plastoquinone. Couples the redox reaction to proton translocation, and thus conserves the redox energy in a proton gradient. The chain is NAD(P)H-quinone oxidoreductase subunit 4L, chloroplastic from Staurastrum punctulatum (Green alga).